Here is a 494-residue protein sequence, read N- to C-terminus: Probable cytosol aminopeptidase (494 aa).

Mn(2+) contacts are provided by K260 and D265. K272 is a catalytic residue. Mn(2+) is bound by residues D283, D342, and E344. The active site involves R346.

It belongs to the peptidase M17 family. Requires Mn(2+) as cofactor.

The protein localises to the cytoplasm. It carries out the reaction Release of an N-terminal amino acid, Xaa-|-Yaa-, in which Xaa is preferably Leu, but may be other amino acids including Pro although not Arg or Lys, and Yaa may be Pro. Amino acid amides and methyl esters are also readily hydrolyzed, but rates on arylamides are exceedingly low.. It catalyses the reaction Release of an N-terminal amino acid, preferentially leucine, but not glutamic or aspartic acids.. Its function is as follows. Presumably involved in the processing and regular turnover of intracellular proteins. Catalyzes the removal of unsubstituted N-terminal amino acids from various peptides. This is Probable cytosol aminopeptidase from Bacillus thuringiensis subsp. konkukian (strain 97-27).